A 714-amino-acid chain; its full sequence is Phosphoribosylformylglycinamidine synthase subunit PurL (714 aa).

His-34 is a catalytic residue. ATP is bound at residue Tyr-37. Glu-78 provides a ligand contact to Mg(2+). Residues 79 to 82 (SHNH) and Arg-101 each bind substrate. The active-site Proton acceptor is the His-80. Position 102 (Asp-102) interacts with Mg(2+). A substrate-binding site is contributed by Gln-226. Asp-254 provides a ligand contact to Mg(2+). Substrate is bound at residue 298–300 (ESQ). Residues Asp-474 and Gly-511 each contribute to the ATP site. Residue Asn-512 participates in Mg(2+) binding. Ser-514 is a binding site for substrate.

It belongs to the FGAMS family. As to quaternary structure, monomer. Part of the FGAM synthase complex composed of 1 PurL, 1 PurQ and 2 PurS subunits.

It localises to the cytoplasm. It catalyses the reaction N(2)-formyl-N(1)-(5-phospho-beta-D-ribosyl)glycinamide + L-glutamine + ATP + H2O = 2-formamido-N(1)-(5-O-phospho-beta-D-ribosyl)acetamidine + L-glutamate + ADP + phosphate + H(+). Its pathway is purine metabolism; IMP biosynthesis via de novo pathway; 5-amino-1-(5-phospho-D-ribosyl)imidazole from N(2)-formyl-N(1)-(5-phospho-D-ribosyl)glycinamide: step 1/2. Functionally, part of the phosphoribosylformylglycinamidine synthase complex involved in the purines biosynthetic pathway. Catalyzes the ATP-dependent conversion of formylglycinamide ribonucleotide (FGAR) and glutamine to yield formylglycinamidine ribonucleotide (FGAM) and glutamate. The FGAM synthase complex is composed of three subunits. PurQ produces an ammonia molecule by converting glutamine to glutamate. PurL transfers the ammonia molecule to FGAR to form FGAM in an ATP-dependent manner. PurS interacts with PurQ and PurL and is thought to assist in the transfer of the ammonia molecule from PurQ to PurL. This Methanothermobacter thermautotrophicus (strain ATCC 29096 / DSM 1053 / JCM 10044 / NBRC 100330 / Delta H) (Methanobacterium thermoautotrophicum) protein is Phosphoribosylformylglycinamidine synthase subunit PurL.